We begin with the raw amino-acid sequence, 263 residues long: Ribonuclease HII (263 aa).

The RNase H type-2 domain maps to 71–262 (QAIAGIDEVG…VKSMCCDSTN (192 aa)). 3 residues coordinate a divalent metal cation: D77, E78, and D172.

The protein belongs to the RNase HII family. Requires Mn(2+) as cofactor. Mg(2+) is required as a cofactor.

The protein resides in the cytoplasm. It catalyses the reaction Endonucleolytic cleavage to 5'-phosphomonoester.. In terms of biological role, endonuclease that specifically degrades the RNA of RNA-DNA hybrids. This is Ribonuclease HII from Streptococcus pyogenes serotype M5 (strain Manfredo).